The chain runs to 657 residues: Threonine--tRNA ligase (657 aa).

A TGS domain is found at 7–70 (DRQQVIITLP…TENARVSIIT (64 aa)). The tract at residues 253–555 (DHRKLGAELG…LIEHTAGNFP (303 aa)) is catalytic. Residues Cys-351, His-402, and His-532 each contribute to the Zn(2+) site.

The protein belongs to the class-II aminoacyl-tRNA synthetase family. In terms of assembly, homodimer. The cofactor is Zn(2+).

Its subcellular location is the cytoplasm. It catalyses the reaction tRNA(Thr) + L-threonine + ATP = L-threonyl-tRNA(Thr) + AMP + diphosphate + H(+). Functionally, catalyzes the attachment of threonine to tRNA(Thr) in a two-step reaction: L-threonine is first activated by ATP to form Thr-AMP and then transferred to the acceptor end of tRNA(Thr). Also edits incorrectly charged L-seryl-tRNA(Thr). This Chlorobaculum tepidum (strain ATCC 49652 / DSM 12025 / NBRC 103806 / TLS) (Chlorobium tepidum) protein is Threonine--tRNA ligase.